A 602-amino-acid polypeptide reads, in one-letter code: Cholinesterase (602 aa).

The first 28 residues, 1–28 (MQSRSTVIYIRFVLWFLLLWVLFEKSHT), serve as a signal peptide directing secretion. Asparagine 85 and asparagine 134 each carry an N-linked (GlcNAc...) asparagine glycan. Residue 144 to 145 (GS) participates in substrate binding. Serine 226 acts as the Acyl-ester intermediate in catalysis. Serine 226 is subject to Phosphoserine. 2 N-linked (GlcNAc...) asparagine glycosylation sites follow: asparagine 269 and asparagine 284. Glutamate 353 acts as the Charge relay system in catalysis. An N-linked (GlcNAc...) asparagine glycan is attached at asparagine 369. The active-site Charge relay system is histidine 466. Asparagine 483, asparagine 509, asparagine 513, and asparagine 514 each carry an N-linked (GlcNAc...) asparagine glycan.

The protein belongs to the type-B carboxylesterase/lipase family. In terms of assembly, homotetramer; disulfide-linked. Dimer of dimers. In terms of tissue distribution, present in most cells except erythrocytes.

It localises to the secreted. It carries out the reaction an acylcholine + H2O = a carboxylate + choline + H(+). Esterase with broad substrate specificity. Contributes to the inactivation of the neurotransmitter acetylcholine. Can degrade neurotoxic organophosphate esters. This Bos taurus (Bovine) protein is Cholinesterase (BCHE).